Here is a 198-residue protein sequence, read N- to C-terminus: Probable GTP-binding protein EngB (198 aa).

Residues asparagine 21 to glycine 195 form the EngB-type G domain. GTP-binding positions include glycine 29–serine 36, glycine 56–leucine 60, aspartate 81–glycine 84, threonine 151–aspartate 154, and valine 174–asparagine 176. Mg(2+) contacts are provided by serine 36 and threonine 58.

This sequence belongs to the TRAFAC class TrmE-Era-EngA-EngB-Septin-like GTPase superfamily. EngB GTPase family. Requires Mg(2+) as cofactor.

Necessary for normal cell division and for the maintenance of normal septation. This is Probable GTP-binding protein EngB from Campylobacter jejuni subsp. jejuni serotype O:2 (strain ATCC 700819 / NCTC 11168).